The following is a 436-amino-acid chain: Trigger factor (436 aa).

Residues 162–247 (GDRVIIDFEG…LNNVSEATLP (86 aa)) form the PPIase FKBP-type domain.

It belongs to the FKBP-type PPIase family. Tig subfamily.

The protein localises to the cytoplasm. It carries out the reaction [protein]-peptidylproline (omega=180) = [protein]-peptidylproline (omega=0). Functionally, involved in protein export. Acts as a chaperone by maintaining the newly synthesized protein in an open conformation. Functions as a peptidyl-prolyl cis-trans isomerase. This is Trigger factor from Neisseria meningitidis serogroup C (strain 053442).